Reading from the N-terminus, the 548-residue chain is uncharacterized protein (548 aa).

The region spanning 8–200 (KLFADMIIQG…LLCVYEGFLK (193 aa)) is the DhaL domain.

This is an uncharacterized protein from Staphylococcus aureus (strain bovine RF122 / ET3-1).